Consider the following 259-residue polypeptide: 3-deoxy-manno-octulosonate cytidylyltransferase (259 aa).

It belongs to the KdsB family.

Its subcellular location is the cytoplasm. The enzyme catalyses 3-deoxy-alpha-D-manno-oct-2-ulosonate + CTP = CMP-3-deoxy-beta-D-manno-octulosonate + diphosphate. It functions in the pathway nucleotide-sugar biosynthesis; CMP-3-deoxy-D-manno-octulosonate biosynthesis; CMP-3-deoxy-D-manno-octulosonate from 3-deoxy-D-manno-octulosonate and CTP: step 1/1. The protein operates within bacterial outer membrane biogenesis; lipopolysaccharide biosynthesis. Functionally, activates KDO (a required 8-carbon sugar) for incorporation into bacterial lipopolysaccharide in Gram-negative bacteria. The chain is 3-deoxy-manno-octulosonate cytidylyltransferase from Xanthomonas axonopodis pv. citri (strain 306).